Here is an 879-residue protein sequence, read N- to C-terminus: mRNA-binding protein PUF3 (879 aa).

Position 83 is a phosphothreonine (T83). Phosphoserine occurs at positions 207 and 210. Disordered stretches follow at residues 222–256 (ESDK…LESE), 344–417 (PANE…QQQQ), and 443–512 (KKRN…QQTY). Residues 237-255 (SGSLYHSSSNSGSSASLES) are compositionally biased toward low complexity. The span at 370-395 (SSPPNNSPFPFAYPNPMMFMPPPPLS) shows a compositional bias: pro residues. Composition is skewed to low complexity over residues 398 to 417 (QQQQ…QQQQ), 449 to 463 (NHPA…KQAN), 472 to 491 (TKNT…TANN), and 501 to 512 (HSQSLQQQQQTY). The PUM-HD domain maps to 513-871 (HRSPLLEQLR…RHLASVEKLA (359 aa)). Pumilio repeat units lie at residues 538–573 (DIFG…VIFN), 574–609 (EIRD…TLVD), 610–645 (QFKG…ELVL), 646–681 (ELSD…FILS), 682–717 (SLTG…SILN), 718–759 (ELKD…EIIE), 760–795 (TVAN…LIIS), and 807–844 (NLED…LIVI).

This sequence belongs to the PUF3 family.

It localises to the mitochondrion outer membrane. It is found in the cytoplasm. In terms of biological role, RNA-binding protein involved in post-transcriptional regulation. Negatively regulates expression of COX17 by binding to the 3'-UTR of COX17 mRNA. Promotes decay of COX17 mRNA by enhancing its rate of deadenylation and subsequent turnover. Predominantly binds to mRNAs encoding mitochondrial proteins and localizes them to the vicinity of mitochondria for translation. Regulates mitochondrial biogenesis, motility and morphology. The sequence is that of mRNA-binding protein PUF3 (PUF3) from Saccharomyces cerevisiae (strain ATCC 204508 / S288c) (Baker's yeast).